Here is a 382-residue protein sequence, read N- to C-terminus: Putative acetyl-CoA C-acetyltransferase VraB (382 aa).

C86 acts as the Acyl-thioester intermediate in catalysis. H338 functions as the Proton acceptor in the catalytic mechanism.

The protein belongs to the thiolase-like superfamily. Thiolase family.

In Staphylococcus epidermidis (strain ATCC 35984 / DSM 28319 / BCRC 17069 / CCUG 31568 / BM 3577 / RP62A), this protein is Putative acetyl-CoA C-acetyltransferase VraB (vraB).